The primary structure comprises 475 residues: Ribulose bisphosphate carboxylase large chain (475 aa).

Residues 1–2 (MV) constitute a propeptide that is removed on maturation. The residue at position 3 (proline 3) is an N-acetylproline. Residue lysine 14 is modified to N6,N6,N6-trimethyllysine. Substrate contacts are provided by asparagine 123 and threonine 173. The active-site Proton acceptor is lysine 175. Substrate is bound at residue lysine 177. Mg(2+) is bound by residues lysine 201, aspartate 203, and glutamate 204. Lysine 201 is modified (N6-carboxylysine). The Proton acceptor role is filled by histidine 294. Residues arginine 295, histidine 327, and serine 379 each coordinate substrate.

Belongs to the RuBisCO large chain family. Type I subfamily. As to quaternary structure, heterohexadecamer of 8 large chains and 8 small chains; disulfide-linked. The disulfide link is formed within the large subunit homodimers. It depends on Mg(2+) as a cofactor. In terms of processing, the disulfide bond which can form in the large chain dimeric partners within the hexadecamer appears to be associated with oxidative stress and protein turnover.

Its subcellular location is the plastid. The protein resides in the chloroplast. It catalyses the reaction 2 (2R)-3-phosphoglycerate + 2 H(+) = D-ribulose 1,5-bisphosphate + CO2 + H2O. It carries out the reaction D-ribulose 1,5-bisphosphate + O2 = 2-phosphoglycolate + (2R)-3-phosphoglycerate + 2 H(+). RuBisCO catalyzes two reactions: the carboxylation of D-ribulose 1,5-bisphosphate, the primary event in carbon dioxide fixation, as well as the oxidative fragmentation of the pentose substrate in the photorespiration process. Both reactions occur simultaneously and in competition at the same active site. This Tetradesmus obliquus (Green alga) protein is Ribulose bisphosphate carboxylase large chain.